A 291-amino-acid chain; its full sequence is MAPSNLPPVFNATSQDIEMLLAAQCHLGSKNLQVHMEPYLWKTRPDGINVINIGKTWEKIVLAARIIAAIDNPADICVISARPYGQRAVLKFAAHTGAVAIAGRFTPGSFTNYITRSFKEPRLIIVTDPRTDSQAIKEASYVNIPVIALCDTDSPTEFVDVAIPTNNKGRHAIGLVWWLLAREVLRLRGTLANRETEWDVVVDLYFYRDPEAEEAKELEEAKAPGVEEIGAAAVETGFGAEGWEAAGGSAFAAAASTTAPPNWEATGGDWATSTAPAEGWAGDAPAGETKW.

The segment at 256-291 (STTAPPNWEATGGDWATSTAPAEGWAGDAPAGETKW) is disordered.

Belongs to the universal ribosomal protein uS2 family. Component of the small ribosomal subunit. Mature ribosomes consist of a small (40S) and a large (60S) subunit. The 40S subunit contains about 33 different proteins and 1 molecule of RNA (18S). The 60S subunit contains about 49 different proteins and 3 molecules of RNA (25S, 5.8S and 5S). Interacts with RPS21.

Its subcellular location is the cytoplasm. Functionally, required for the assembly and/or stability of the 40S ribosomal subunit. Required for the processing of the 20S rRNA-precursor to mature 18S rRNA in a late step of the maturation of 40S ribosomal subunits. The protein is Small ribosomal subunit protein uS2 of Coccidioides immitis (strain RS) (Valley fever fungus).